Here is a 338-residue protein sequence, read N- to C-terminus: Glycerol-3-phosphate dehydrogenase [NAD(P)+] (338 aa).

The NADPH site is built by S13, W14, and K108. The sn-glycerol 3-phosphate site is built by K108, G139, and S141. A143 serves as a coordination point for NADPH. 5 residues coordinate sn-glycerol 3-phosphate: K194, D247, S257, R258, and N259. Catalysis depends on K194, which acts as the Proton acceptor. R258 serves as a coordination point for NADPH. Residues V282 and E284 each contribute to the NADPH site.

It belongs to the NAD-dependent glycerol-3-phosphate dehydrogenase family.

It localises to the cytoplasm. The catalysed reaction is sn-glycerol 3-phosphate + NAD(+) = dihydroxyacetone phosphate + NADH + H(+). The enzyme catalyses sn-glycerol 3-phosphate + NADP(+) = dihydroxyacetone phosphate + NADPH + H(+). It participates in membrane lipid metabolism; glycerophospholipid metabolism. In terms of biological role, catalyzes the reduction of the glycolytic intermediate dihydroxyacetone phosphate (DHAP) to sn-glycerol 3-phosphate (G3P), the key precursor for phospholipid synthesis. The chain is Glycerol-3-phosphate dehydrogenase [NAD(P)+] from Streptococcus pneumoniae (strain CGSP14).